The following is a 305-amino-acid chain: Methionyl-tRNA formyltransferase (305 aa).

A (6S)-5,6,7,8-tetrahydrofolate-binding site is contributed by 111–114 (SLLP).

It belongs to the Fmt family.

It carries out the reaction L-methionyl-tRNA(fMet) + (6R)-10-formyltetrahydrofolate = N-formyl-L-methionyl-tRNA(fMet) + (6S)-5,6,7,8-tetrahydrofolate + H(+). Functionally, attaches a formyl group to the free amino group of methionyl-tRNA(fMet). The formyl group appears to play a dual role in the initiator identity of N-formylmethionyl-tRNA by promoting its recognition by IF2 and preventing the misappropriation of this tRNA by the elongation apparatus. This is Methionyl-tRNA formyltransferase from Campylobacter jejuni subsp. jejuni serotype O:2 (strain ATCC 700819 / NCTC 11168).